Here is a 102-residue protein sequence, read N- to C-terminus: Large ribosomal subunit protein uL24 (102 aa).

The protein belongs to the universal ribosomal protein uL24 family. Part of the 50S ribosomal subunit.

Functionally, one of two assembly initiator proteins, it binds directly to the 5'-end of the 23S rRNA, where it nucleates assembly of the 50S subunit. Its function is as follows. One of the proteins that surrounds the polypeptide exit tunnel on the outside of the subunit. This Rhizobium leguminosarum bv. trifolii (strain WSM2304) protein is Large ribosomal subunit protein uL24.